We begin with the raw amino-acid sequence, 146 residues long: MYSANRSHRAETRNRSKDELRKVINSLEKVRRWEKKLVLIKDTNIRIYKWVPVSAQNIMAPPKIKEVKEVDEESNQVPSAENSQDSTSVTQPPPQFDINEDSNFSTGDHFDSDSNQTFEPQNYQGGATGSTDFSSMRDAEMTSKQP.

The tract at residues 59 to 146 (MAPPKIKEVK…RDAEMTSKQP (88 aa)) is disordered. Composition is skewed to polar residues over residues 75 to 90 (NQVP…TSVT) and 113 to 134 (DSNQ…TDFS). Residues 135–146 (SMRDAEMTSKQP) show a composition bias toward basic and acidic residues.

It belongs to the BCL7 family. Ubiquitous.

The protein localises to the nucleus. Functionally, required for the terminal differentiation of seam cells, and the differentiation of distal tip cells important for normal somatic gonad and germ cell development. Plays a role in the Wnt signaling pathway, regulating the expression of beta-catenin homologs wrm-1, bar-1 and sys-1, and the localization of wrm-1 and the wnt signaling pathway component pop-1 during asymmetric cell division of seam cells and the Z-cell lineage of the somatic gonad, respectively. May have a pro-apoptotic role, possibly linked to the negative regulation of expression of anti-apoptotic factor ced-9. The sequence is that of BCL7-like protein from Caenorhabditis elegans.